A 344-amino-acid chain; its full sequence is Uroporphyrinogen decarboxylase (344 aa).

Residues 24–28 (RQAGR), Phe43, Asp74, Tyr151, Ser206, and His323 contribute to the substrate site.

Belongs to the uroporphyrinogen decarboxylase family. Homodimer.

It is found in the cytoplasm. The catalysed reaction is uroporphyrinogen III + 4 H(+) = coproporphyrinogen III + 4 CO2. It functions in the pathway porphyrin-containing compound metabolism; protoporphyrin-IX biosynthesis; coproporphyrinogen-III from 5-aminolevulinate: step 4/4. Its function is as follows. Catalyzes the decarboxylation of four acetate groups of uroporphyrinogen-III to yield coproporphyrinogen-III. This Rhodobacter capsulatus (Rhodopseudomonas capsulata) protein is Uroporphyrinogen decarboxylase.